The primary structure comprises 384 residues: tRNA-specific 2-thiouridylase MnmA (384 aa).

Residues 30 to 37 (GMSGGVDS) and Met56 each bind ATP. The interval 116–118 (NPD) is interaction with target base in tRNA. Cys121 functions as the Nucleophile in the catalytic mechanism. A disulfide bridge connects residues Cys121 and Cys218. Residue Gly146 participates in ATP binding. An interaction with tRNA region spans residues 168–170 (KDQ). Cys218 functions as the Cysteine persulfide intermediate in the catalytic mechanism. The interaction with tRNA stretch occupies residues 330–331 (RY).

It belongs to the MnmA/TRMU family.

Its subcellular location is the cytoplasm. It carries out the reaction S-sulfanyl-L-cysteinyl-[protein] + uridine(34) in tRNA + AH2 + ATP = 2-thiouridine(34) in tRNA + L-cysteinyl-[protein] + A + AMP + diphosphate + H(+). Functionally, catalyzes the 2-thiolation of uridine at the wobble position (U34) of tRNA, leading to the formation of s(2)U34. This Haemophilus ducreyi (strain 35000HP / ATCC 700724) protein is tRNA-specific 2-thiouridylase MnmA.